A 254-amino-acid polypeptide reads, in one-letter code: Thiazole synthase (254 aa).

The Schiff-base intermediate with DXP role is filled by K93. Residues G154, 181–182 (AG), and 203–204 (NT) each bind 1-deoxy-D-xylulose 5-phosphate.

The protein belongs to the ThiG family. In terms of assembly, homotetramer. Forms heterodimers with either ThiH or ThiS.

Its subcellular location is the cytoplasm. It carries out the reaction [ThiS sulfur-carrier protein]-C-terminal-Gly-aminoethanethioate + 2-iminoacetate + 1-deoxy-D-xylulose 5-phosphate = [ThiS sulfur-carrier protein]-C-terminal Gly-Gly + 2-[(2R,5Z)-2-carboxy-4-methylthiazol-5(2H)-ylidene]ethyl phosphate + 2 H2O + H(+). It functions in the pathway cofactor biosynthesis; thiamine diphosphate biosynthesis. Its function is as follows. Catalyzes the rearrangement of 1-deoxy-D-xylulose 5-phosphate (DXP) to produce the thiazole phosphate moiety of thiamine. Sulfur is provided by the thiocarboxylate moiety of the carrier protein ThiS. In vitro, sulfur can be provided by H(2)S. The chain is Thiazole synthase from Ruegeria pomeroyi (strain ATCC 700808 / DSM 15171 / DSS-3) (Silicibacter pomeroyi).